The sequence spans 346 residues: tRNA-specific 2-thiouridylase MnmA (346 aa).

ATP is bound at residue 6-13; that stretch reads AMSGGTDS. The active-site Nucleophile is cysteine 90. Cysteine 90 and cysteine 187 are disulfide-bonded. ATP is bound at residue glycine 114. The interval 137 to 139 is interaction with tRNA; that stretch reads KDQ. Cysteine 187 acts as the Cysteine persulfide intermediate in catalysis. The segment at 292–293 is interaction with tRNA; the sequence is RY.

Belongs to the MnmA/TRMU family.

It is found in the cytoplasm. The enzyme catalyses S-sulfanyl-L-cysteinyl-[protein] + uridine(34) in tRNA + AH2 + ATP = 2-thiouridine(34) in tRNA + L-cysteinyl-[protein] + A + AMP + diphosphate + H(+). Its function is as follows. Catalyzes the 2-thiolation of uridine at the wobble position (U34) of tRNA, leading to the formation of s(2)U34. This Nitratidesulfovibrio vulgaris (strain ATCC 29579 / DSM 644 / CCUG 34227 / NCIMB 8303 / VKM B-1760 / Hildenborough) (Desulfovibrio vulgaris) protein is tRNA-specific 2-thiouridylase MnmA.